The chain runs to 467 residues: Dimethylamine methyltransferase MtbB2 (467 aa).

A non-standard amino acid (pyrrolysine) is located at residue Pyl-356.

The protein belongs to the dimethylamine methyltransferase family.

The enzyme catalyses Co(I)-[dimethylamine-specific corrinoid protein] + dimethylamine + H(+) = methyl-Co(III)-[dimethylamine-specific corrinoid protein] + methylamine. It participates in one-carbon metabolism; methanogenesis from dimethylamine. Catalyzes the transfer of a methyl group from dimethylamine to the corrinoid cofactor of MtbC. In Methanosarcina barkeri (strain Fusaro / DSM 804), this protein is Dimethylamine methyltransferase MtbB2 (mtbB2).